Here is a 1099-residue protein sequence, read N- to C-terminus: Carbamoyl phosphate synthase large chain (1099 aa).

The carboxyphosphate synthetic domain stretch occupies residues 1–402 (MPRREDIKRI…ALGKALRSLE (402 aa)). ATP contacts are provided by Arg129, Arg169, Gly175, Gly176, Glu208, Val210, Glu215, Gly241, Ile242, His243, Gln285, and Glu299. Positions 133-328 (KKTMEEAGLE…IAKIAALLAV (196 aa)) constitute an ATP-grasp 1 domain. The Mg(2+) site is built by Gln285, Glu299, and Asn301. Residues Gln285, Glu299, and Asn301 each contribute to the Mn(2+) site. The interval 403 to 541 (LDAAPKLDLD…STYNGVENEA (139 aa)) is oligomerization domain. Residues 542–944 (IPTDKEKIMI…AFAKAEIAAG (403 aa)) are carbamoyl phosphate synthetic domain. Residues 666 to 857 (AKLLKRIGLR…VAKIAAKIMV (192 aa)) enclose the ATP-grasp 2 domain. 10 residues coordinate ATP: Arg702, Lys741, Leu743, Glu748, Gly773, Val774, His775, Ser776, Gln816, and Glu828. Residues Gln816, Glu828, and Asn830 each coordinate Mg(2+). The Mn(2+) site is built by Gln816, Glu828, and Asn830. The MGS-like domain occupies 945 to 1099 (NPLPTEGAIL…VRKLTDTWKM (155 aa)). The interval 945-1099 (NPLPTEGAIL…VRKLTDTWKM (155 aa)) is allosteric domain.

This sequence belongs to the CarB family. As to quaternary structure, composed of two chains; the small (or glutamine) chain promotes the hydrolysis of glutamine to ammonia, which is used by the large (or ammonia) chain to synthesize carbamoyl phosphate. Tetramer of heterodimers (alpha,beta)4. It depends on Mg(2+) as a cofactor. Mn(2+) is required as a cofactor.

The catalysed reaction is hydrogencarbonate + L-glutamine + 2 ATP + H2O = carbamoyl phosphate + L-glutamate + 2 ADP + phosphate + 2 H(+). It catalyses the reaction hydrogencarbonate + NH4(+) + 2 ATP = carbamoyl phosphate + 2 ADP + phosphate + 2 H(+). It functions in the pathway amino-acid biosynthesis; L-arginine biosynthesis; carbamoyl phosphate from bicarbonate: step 1/1. Its pathway is pyrimidine metabolism; UMP biosynthesis via de novo pathway; (S)-dihydroorotate from bicarbonate: step 1/3. Large subunit of the glutamine-dependent carbamoyl phosphate synthetase (CPSase). CPSase catalyzes the formation of carbamoyl phosphate from the ammonia moiety of glutamine, carbonate, and phosphate donated by ATP, constituting the first step of 2 biosynthetic pathways, one leading to arginine and/or urea and the other to pyrimidine nucleotides. The large subunit (synthetase) binds the substrates ammonia (free or transferred from glutamine from the small subunit), hydrogencarbonate and ATP and carries out an ATP-coupled ligase reaction, activating hydrogencarbonate by forming carboxy phosphate which reacts with ammonia to form carbamoyl phosphate. The chain is Carbamoyl phosphate synthase large chain from Thermotoga neapolitana (strain ATCC 49049 / DSM 4359 / NBRC 107923 / NS-E).